Consider the following 463-residue polypeptide: ATP synthase subunit beta (463 aa).

Residue glycine 152–threonine 159 coordinates ATP.

This sequence belongs to the ATPase alpha/beta chains family. In terms of assembly, F-type ATPases have 2 components, CF(1) - the catalytic core - and CF(0) - the membrane proton channel. CF(1) has five subunits: alpha(3), beta(3), gamma(1), delta(1), epsilon(1). CF(0) has three main subunits: a(1), b(2) and c(9-12). The alpha and beta chains form an alternating ring which encloses part of the gamma chain. CF(1) is attached to CF(0) by a central stalk formed by the gamma and epsilon chains, while a peripheral stalk is formed by the delta and b chains.

It localises to the cell inner membrane. The enzyme catalyses ATP + H2O + 4 H(+)(in) = ADP + phosphate + 5 H(+)(out). Produces ATP from ADP in the presence of a proton gradient across the membrane. The catalytic sites are hosted primarily by the beta subunits. This is ATP synthase subunit beta from Shewanella sp. (strain MR-7).